Reading from the N-terminus, the 258-residue chain is UDP-N-acetylenolpyruvoylglucosamine reductase (258 aa).

Arg-142 is a catalytic residue. Ser-184 acts as the Proton donor in catalysis. The active site involves Glu-254.

Belongs to the MurB family. FAD serves as cofactor.

The protein localises to the cytoplasm. The enzyme catalyses UDP-N-acetyl-alpha-D-muramate + NADP(+) = UDP-N-acetyl-3-O-(1-carboxyvinyl)-alpha-D-glucosamine + NADPH + H(+). Its pathway is cell wall biogenesis; peptidoglycan biosynthesis. Cell wall formation. The sequence is that of UDP-N-acetylenolpyruvoylglucosamine reductase from Campylobacter jejuni (strain RM1221).